A 545-amino-acid chain; its full sequence is Calcium-dependent protein kinase 10 (545 aa).

The segment at 1–36 (MGNCNACVRPDSKESKPSSKPKKPNRDRKLNPFAGD) is disordered. Gly-2 is lipidated: N-myristoyl glycine. One can recognise a Protein kinase domain in the interval 63–321 (YILGRELGRG…AQQVLAHPWI (259 aa)). Residues 69–77 (LGRGEFGIT) and Lys-92 contribute to the ATP site. The active-site Proton acceptor is the Asp-187. Position 227 is a phosphoserine (Ser-227). Residues 327-357 (APNVPLGDIVRSRLKQFSMMNRFKKKVLRVI) are autoinhibitory domain. EF-hand domains are found at residues 364 to 399 (QEVE…VGSQ), 400 to 435 (LGEP…LQKI), 436 to 471 (ENDE…ELGE), and 472 to 507 (PDAS…GTDW). Residues Asp-377, Asp-379, Asp-381, Lys-383, Glu-388, Asp-413, Asp-415, Asn-417, Glu-424, Asp-449, Asp-451, Ser-453, Tyr-455, Glu-460, Asp-485, Asp-487, Asp-489, Arg-491, and Glu-496 each contribute to the Ca(2+) site.

It belongs to the protein kinase superfamily. Ser/Thr protein kinase family. CDPK subfamily.

The protein localises to the membrane. The enzyme catalyses L-seryl-[protein] + ATP = O-phospho-L-seryl-[protein] + ADP + H(+). It carries out the reaction L-threonyl-[protein] + ATP = O-phospho-L-threonyl-[protein] + ADP + H(+). Its activity is regulated as follows. Activated by calcium. Autophosphorylation may play an important role in the regulation of the kinase activity. In terms of biological role, may play a role in signal transduction pathways that involve calcium as a second messenger. May be a positive regulator controlling stress signal transduction. The protein is Calcium-dependent protein kinase 10 (CPK10) of Arabidopsis thaliana (Mouse-ear cress).